We begin with the raw amino-acid sequence, 279 residues long: Large ribosomal subunit protein uL2 (279 aa).

A disordered region spans residues 222 to 264 (GVAMNPVDHPHGGGEGRTSGGRNPVTPAGKPTKGAKTRVNKAT).

The protein belongs to the universal ribosomal protein uL2 family. Part of the 50S ribosomal subunit. Forms a bridge to the 30S subunit in the 70S ribosome.

In terms of biological role, one of the primary rRNA binding proteins. Required for association of the 30S and 50S subunits to form the 70S ribosome, for tRNA binding and peptide bond formation. It has been suggested to have peptidyltransferase activity; this is somewhat controversial. Makes several contacts with the 16S rRNA in the 70S ribosome. The protein is Large ribosomal subunit protein uL2 of Caulobacter sp. (strain K31).